Consider the following 133-residue polypeptide: ATP synthase epsilon chain (133 aa).

It belongs to the ATPase epsilon chain family. In terms of assembly, F-type ATPases have 2 components, CF(1) - the catalytic core - and CF(0) - the membrane proton channel. CF(1) has five subunits: alpha(3), beta(3), gamma(1), delta(1), epsilon(1). CF(0) has three main subunits: a, b and c.

The protein resides in the cell membrane. Its function is as follows. Produces ATP from ADP in the presence of a proton gradient across the membrane. This Clostridium botulinum (strain 657 / Type Ba4) protein is ATP synthase epsilon chain.